The sequence spans 212 residues: Ribonuclease HII (212 aa).

The RNase H type-2 domain maps to 4–206; sequence EVQCGIDEAG…YKKIKEDVES (203 aa). A divalent metal cation contacts are provided by Asp-10, Glu-11, and Asp-103.

This sequence belongs to the RNase HII family. It depends on Mn(2+) as a cofactor. Requires Mg(2+) as cofactor.

It is found in the cytoplasm. The enzyme catalyses Endonucleolytic cleavage to 5'-phosphomonoester.. In terms of biological role, endonuclease that specifically degrades the RNA of RNA-DNA hybrids. The sequence is that of Ribonuclease HII from Thermoplasma volcanium (strain ATCC 51530 / DSM 4299 / JCM 9571 / NBRC 15438 / GSS1).